The primary structure comprises 442 residues: Membrane sensor protein UhpC (442 aa).

Over 1–30 (MLSFLKAPANAPLITDKHEVDARYRYWRRH) the chain is Cytoplasmic. The helical transmembrane segment at 31 to 51 (ILITIWLGYALFYFTRKSFNA) threads the bilayer. The Periplasmic portion of the chain corresponds to 52-66 (AAPEILASGILTRSD). Residues 67–87 (IGLLATLFYITYGVSKFVSGI) form a helical membrane-spanning segment. The Cytoplasmic portion of the chain corresponds to 88–95 (VSDRSNAR). The chain crosses the membrane as a helical span at residues 96–118 (YFMGIGLIATGVVNILFGFSTSL). Over 119–121 (WAF) the chain is Periplasmic. The chain crosses the membrane as a helical span at residues 122–144 (ALLWALNAFFQGFGSPVCARLLT). Topologically, residues 145–162 (AWYSRTERGGWWALWNTA) are cytoplasmic. A helical membrane pass occupies residues 163–183 (HNVGGALIPLVMAAVALHYGW). A topological domain (periplasmic) is located at residue Arg184. A helical transmembrane segment spans residues 185–205 (VGMMVAGLLAIGVGMVLCWRL). Over 206 to 244 (RDRPQAIGLPPVGDWRHDALEVAQQQEGAGLSRKEILAK) the chain is Cytoplasmic. Residues 245 to 265 (YVLLNPYIWLLSLCYVLVYVV) traverse the membrane as a helical segment. Over 266–289 (RAAINDWGNLYMSETLGVDLVTAN) the chain is Periplasmic. Residues 290 to 310 (TAVSMFELGGFIGALVAGWGS) traverse the membrane as a helical segment. Residues 311 to 322 (DKLFNGNRGPMN) are Cytoplasmic-facing. Residues 323-343 (LIFAAGILLSVGSLWLMPFAS) form a helical membrane-spanning segment. Over 344 to 347 (YVMQ) the chain is Periplasmic. Residues 348–368 (AACFFTTGFFVFGPQMLIGMA) traverse the membrane as a helical segment. Topologically, residues 369–379 (AAECSHKEAAG) are cytoplasmic. The chain crosses the membrane as a helical span at residues 380-400 (AATGFVGLFAYLGASLSGWPL). At 401 to 410 (AKVLEIWHWT) the chain is on the periplasmic side. The helical transmembrane segment at 411–431 (GFFAVIAIAAGISALLLLPFL) threads the bilayer. Residues 432–442 (NAQAPRETHEA) are Cytoplasmic-facing.

This sequence belongs to the major facilitator superfamily. Organophosphate:Pi antiporter (OPA) (TC 2.A.1.4) family.

The protein localises to the cell inner membrane. Its function is as follows. Part of the UhpABC signaling cascade that controls the expression of the hexose phosphate transporter UhpT. UhpC senses external glucose-6-phosphate and interacts with the histidine kinase UhpB, leading to the stimulation of the autokinase activity of UhpB. This chain is Membrane sensor protein UhpC (uhpC), found in Salmonella typhimurium (strain LT2 / SGSC1412 / ATCC 700720).